The primary structure comprises 343 residues: Methionine import ATP-binding protein MetN 1 (343 aa).

The ABC transporter domain occupies 2–241; sequence IKLSNITKVF…PKTPLAQKFI (240 aa). Residue 38-45 coordinates ATP; the sequence is GASGAGKS.

It belongs to the ABC transporter superfamily. Methionine importer (TC 3.A.1.24) family. The complex is composed of two ATP-binding proteins (MetN), two transmembrane proteins (MetI) and a solute-binding protein (MetQ).

The protein localises to the cell inner membrane. The catalysed reaction is L-methionine(out) + ATP + H2O = L-methionine(in) + ADP + phosphate + H(+). It carries out the reaction D-methionine(out) + ATP + H2O = D-methionine(in) + ADP + phosphate + H(+). In terms of biological role, part of the ABC transporter complex MetNIQ involved in methionine import. Responsible for energy coupling to the transport system. This Salmonella paratyphi A (strain ATCC 9150 / SARB42) protein is Methionine import ATP-binding protein MetN 1.